Here is a 167-residue protein sequence, read N- to C-terminus: Antibacterial peptide PMAP-37 (167 aa).

The first 29 residues, M1 to A29, serve as a signal peptide directing secretion. Residues Q30 to V130 constitute a propeptide that is removed on maturation. Cystine bridges form between C85–C96 and C107–C124.

Belongs to the cathelicidin family.

The protein resides in the secreted. Exerts antimicrobial activity against both Gram-positive and negative bacteria with minimal inhibitory concentrations ranging over 1-4 micro molar. Its activity appears to be mediated by its ability to damage bacterial membranes. This chain is Antibacterial peptide PMAP-37 (PMAP37), found in Sus scrofa (Pig).